The following is a 459-amino-acid chain: FBD-associated F-box protein At1g61320 (459 aa).

The tract at residues 1–25 (MAPPTKRTRVEMAESSNKRMKPSET) is disordered. One can recognise an F-box domain in the interval 21–69 (KPSETVPEDVLELMMSTYLPVQSLLTTRVLSKRFRETEVRSLDLDFSGI). Residues 396–428 (VKIIGYKGHWHELDIVEFFVKNAPSLKRLELQM) form the FBD domain.

This Arabidopsis thaliana (Mouse-ear cress) protein is FBD-associated F-box protein At1g61320.